We begin with the raw amino-acid sequence, 483 residues long: Macrophage receptor MARCO (483 aa).

The Cytoplasmic portion of the chain corresponds to 1 to 48 (MGNKKALKEEAFLGSAEEGADFDQAMFPVMETFEINDPMPKKRNWGSF). A helical; Signal-anchor for type II membrane protein membrane pass occupies residues 49–69 (CTAVMAIHLILLTAGTTLLTL). Residues 70–483 (KVLSLQKWIL…HNEDAGVECR (414 aa)) lie on the Extracellular side of the membrane. 2 N-linked (GlcNAc...) asparagine glycosylation sites follow: Asn85 and Asn137. Positions 146–386 (RIKGERGSPG…GEKGEKGQSF (241 aa)) are disordered. One can recognise a Collagen-like domain in the interval 148 to 383 (KGERGSPGIP…GQKGEKGEKG (236 aa)). A compositionally biased stretch (low complexity) spans 153 to 166 (SPGIPGLQGPPGIK). Positions 193-216 (KGSKGDKGLIGPKGEHGTKGDKGD) are enriched in basic and acidic residues. Positions 273 to 286 (VPGTPGAAGPSGAK) are enriched in low complexity. The span at 376 to 386 (KGEKGEKGQSF) shows a compositional bias: basic and acidic residues. In terms of domain architecture, SRCR spans 389-483 (VRIVGGTNRG…HNEDAGVECR (95 aa)). Cystine bridges form between Cys412–Cys472, Cys425–Cys482, and Cys452–Cys462.

Homotrimer; disulfide-linked. Trimers may assemble in larger oligomers thus resulting in the creation of a large surface capable of interacting with very large ligands. N-glycosylated. In terms of tissue distribution, expressed in alveolar macrophages, macrophages of lymph node sinues, and Kupffer cells in liver (at protein level).

It is found in the cell membrane. Its function is as follows. Pattern recognition receptor (PRR) which binds Gram-positive and Gram-negative bacteria. Also plays a role in binding of unopsonized particles by alveolar macrophages. Binds to the secretoglobin SCGB3A2. This is Macrophage receptor MARCO (MARCO) from Mesocricetus auratus (Golden hamster).